The chain runs to 692 residues: UvrABC system protein B (692 aa).

The 156-residue stretch at 32 to 187 (ENIENGEKAQ…LLNDLVGIQF (156 aa)) folds into the Helicase ATP-binding domain. ATP is bound at residue 45 to 52 (GATGTGKT). A Beta-hairpin motif is present at residues 98–121 (YYDYYQPEAYVPSSDTYIEKDSSV). Residues 436 to 631 (QIDDLVGEIH…TIKKEIRDLI (196 aa)) form the Helicase C-terminal domain. The region spanning 656-691 (KALVKKLEKEMQQAAAALDFEGAAQLRDMVLELRAM) is the UVR domain.

The protein belongs to the UvrB family. Forms a heterotetramer with UvrA during the search for lesions. Interacts with UvrC in an incision complex.

The protein resides in the cytoplasm. Functionally, the UvrABC repair system catalyzes the recognition and processing of DNA lesions. A damage recognition complex composed of 2 UvrA and 2 UvrB subunits scans DNA for abnormalities. Upon binding of the UvrA(2)B(2) complex to a putative damaged site, the DNA wraps around one UvrB monomer. DNA wrap is dependent on ATP binding by UvrB and probably causes local melting of the DNA helix, facilitating insertion of UvrB beta-hairpin between the DNA strands. Then UvrB probes one DNA strand for the presence of a lesion. If a lesion is found the UvrA subunits dissociate and the UvrB-DNA preincision complex is formed. This complex is subsequently bound by UvrC and the second UvrB is released. If no lesion is found, the DNA wraps around the other UvrB subunit that will check the other stand for damage. This Lactococcus lactis subsp. cremoris (strain MG1363) protein is UvrABC system protein B.